A 208-amino-acid chain; its full sequence is Uracil phosphoribosyltransferase (208 aa).

Residues Arg78, Arg103, and 130–138 each bind 5-phospho-alpha-D-ribose 1-diphosphate; that span reads DPMLATGGT. Residues Ile193 and 198-200 contribute to the uracil site; that span reads GDA. Residue Asp199 coordinates 5-phospho-alpha-D-ribose 1-diphosphate.

Belongs to the UPRTase family. Mg(2+) serves as cofactor.

The catalysed reaction is UMP + diphosphate = 5-phospho-alpha-D-ribose 1-diphosphate + uracil. The protein operates within pyrimidine metabolism; UMP biosynthesis via salvage pathway; UMP from uracil: step 1/1. Allosterically activated by GTP. Catalyzes the conversion of uracil and 5-phospho-alpha-D-ribose 1-diphosphate (PRPP) to UMP and diphosphate. The sequence is that of Uracil phosphoribosyltransferase from Solidesulfovibrio magneticus (strain ATCC 700980 / DSM 13731 / RS-1) (Desulfovibrio magneticus).